The primary structure comprises 258 residues: Pyridoxal phosphate homeostasis protein (258 aa).

At K47 the chain carries N6-(pyridoxal phosphate)lysine.

It belongs to the pyridoxal phosphate-binding protein YggS/PROSC family.

Pyridoxal 5'-phosphate (PLP)-binding protein, which is involved in PLP homeostasis. This Mycobacterium bovis (strain ATCC BAA-935 / AF2122/97) protein is Pyridoxal phosphate homeostasis protein.